We begin with the raw amino-acid sequence, 970 residues long: Pentatricopeptide repeat-containing protein At1g18485 (970 aa).

PPR repeat units lie at residues 119–149 (DDVLCTRIITMYAMCGSPDDSRFVFDALRSK), 150–185 (NLFQWNAVISSYSRNELYDEVLETFIEMISTTDLLP), 186–220 (DHFTYPCVIKACAGMSDVGIGLAVHGLVVKTGLVE), 221–251 (DVFVGNALVSFYGTHGFVTDALQLFDIMPER), 252–282 (NLVSWNSMIRVFSDNGFSEESFLLLGEMMEE), 291–325 (DVATLVTVLPVCAREREIGLGKGVHGWAVKLRLDK), 326–356 (ELVLNNALMDMYSKCGCITNAQMIFKMNNNK), 357–391 (NVVSWNTMVGGFSAEGDTHGTFDVLRQMLAGGEDV), 394–428 (DEVTILNAVPVCFHESFLPSLKELHCYSLKQEFVY), 429–459 (NELVANAFVASYAKCGSLSYAQRVFHGIRSK), 460–494 (TVNSWNALIGGHAQSNDPRLSLDAHLQMKISGLLP), 495–529 (DSFTVCSLLSACSKLKSLRLGKEVHGFIIRNWLER), 530–560 (DLFVYLSVLSLYIHCGELCTVQALFDAMEDK), 561–595 (SLVSWNTVITGYLQNGFPDRALGVFRQMVLYGIQL), 597–630 (GISMMPVFGACSLLPSLRLGREAHAYALKHLLED), 631–661 (DAFIACSLIDMYAKNGSITQSSKVFNGLKEK), 662–696 (STASWNAMIMGYGIHGLAKEAIKLFEEMQRTGHNP), 697–727 (DDLTFLGVLTACNHSGLIHEGLRYLDQMKSS), and 733–764 (NLKHYACVIDMLGRAGQLDKALRVVAEEMSEE). The tract at residues 770 to 845 (WKSLLSSCRI…AGCSWIELNR (76 aa)) is type E motif. A type E(+) motif region spans residues 846–875 (KVFSFVVGERFLDGFEEIKSLWSILEMKIS). Residues 876-970 (KMGYRPDTMS…NGVCSCGDYW (95 aa)) form a type DYW motif region.

The protein belongs to the PPR family. PCMP-H subfamily.

The protein is Pentatricopeptide repeat-containing protein At1g18485 (PCMP-H8) of Arabidopsis thaliana (Mouse-ear cress).